The following is an 811-amino-acid chain: Leucine--tRNA ligase (811 aa).

Residues 38 to 49 carry the 'HIGH' region motif; it reads SYPSGSNLHAGH. Positions 570–574 match the 'KMSKS' region motif; it reads KMSKS. Residue lysine 573 participates in ATP binding.

The protein belongs to the class-I aminoacyl-tRNA synthetase family.

It is found in the cytoplasm. It carries out the reaction tRNA(Leu) + L-leucine + ATP = L-leucyl-tRNA(Leu) + AMP + diphosphate. The sequence is that of Leucine--tRNA ligase from Clostridium kluyveri (strain ATCC 8527 / DSM 555 / NBRC 12016 / NCIMB 10680 / K1).